We begin with the raw amino-acid sequence, 319 residues long: Acetyl-coenzyme A carboxylase carboxyl transferase subunit alpha (319 aa).

The region spanning 35-296 is the CoA carboxyltransferase C-terminal domain; the sequence is NIDEEVHRLR…KAQLLADLAD (262 aa).

This sequence belongs to the AccA family. In terms of assembly, acetyl-CoA carboxylase is a heterohexamer composed of biotin carboxyl carrier protein (AccB), biotin carboxylase (AccC) and two subunits each of ACCase subunit alpha (AccA) and ACCase subunit beta (AccD).

It is found in the cytoplasm. The catalysed reaction is N(6)-carboxybiotinyl-L-lysyl-[protein] + acetyl-CoA = N(6)-biotinyl-L-lysyl-[protein] + malonyl-CoA. It participates in lipid metabolism; malonyl-CoA biosynthesis; malonyl-CoA from acetyl-CoA: step 1/1. In terms of biological role, component of the acetyl coenzyme A carboxylase (ACC) complex. First, biotin carboxylase catalyzes the carboxylation of biotin on its carrier protein (BCCP) and then the CO(2) group is transferred by the carboxyltransferase to acetyl-CoA to form malonyl-CoA. The protein is Acetyl-coenzyme A carboxylase carboxyl transferase subunit alpha of Shigella sonnei (strain Ss046).